The chain runs to 99 residues: Pyruvate synthase subunit PorD (99 aa).

4Fe-4S ferredoxin-type domains follow at residues 32-60 (MRPI…IQEG) and 61-91 (GIMK…MRPE). [4Fe-4S] cluster-binding residues include Cys-41, Cys-44, Cys-47, Cys-51, Cys-71, Cys-74, Cys-77, and Cys-81.

As to quaternary structure, heterotetramer of one alpha, one beta, one delta and one gamma chain. The cofactor is [4Fe-4S] cluster.

This is Pyruvate synthase subunit PorD (porD) from Thermotoga maritima (strain ATCC 43589 / DSM 3109 / JCM 10099 / NBRC 100826 / MSB8).